Reading from the N-terminus, the 359-residue chain is 2-epi-5-epi-valiolone 7-kinase (359 aa).

The interval 28-48 is disordered; it reads GGLGEVHTTPSPGHARRPGAG.

The protein belongs to the ROK (NagC/XylR) family.

The catalysed reaction is 2-epi-5-epi-valiolone + ATP = 2-epi-5-epi-valiolone 7-phosphate + ADP + H(+). Catalyzes the conversion of 2-epi-5-epi-valiolone to 2-epi-5-epi-valiolone 7-phosphate. Involved in the biosynthesis of the acarviose moiety of the alpha-glucosidase inhibitor acarbose. The polypeptide is 2-epi-5-epi-valiolone 7-kinase (Actinoplanes sp. (strain ATCC 31044 / CBS 674.73 / SE50/110)).